Here is a 488-residue protein sequence, read N- to C-terminus: Katanin p60 ATPase-containing subunit A-like 1 (488 aa).

M1 is modified (N-acetylmethionine). Residues 128 to 179 form a disordered region; it reads GAGARGLVGRAHQISKSDKAASRDKDYRARGRDDKARKNMQDGASDGEIPKF. The segment covering 142–167 has biased composition (basic and acidic residues); sequence SKSDKAASRDKDYRARGRDDKARKNM. S172 bears the Phosphoserine mark. 246 to 253 lines the ATP pocket; the sequence is GPPGTGKT.

This sequence belongs to the AAA ATPase family. Katanin p60 subunit A1 subfamily. A-like 1 sub-subfamily. As to quaternary structure, interacts with KATNB1 and KATNBL1.

The protein localises to the cytoplasm. The protein resides in the cytoskeleton. It is found in the spindle pole. It localises to the spindle. It carries out the reaction n ATP + n H2O + a microtubule = n ADP + n phosphate + (n+1) alpha/beta tubulin heterodimers.. In terms of biological role, regulates microtubule dynamics in Sertoli cells, a process that is essential for spermiogenesis and male fertility. Severs microtubules in an ATP-dependent manner, promoting rapid reorganization of cellular microtubule arrays. Has microtubule-severing activity in vitro. In Rattus norvegicus (Rat), this protein is Katanin p60 ATPase-containing subunit A-like 1 (Katnal1).